The sequence spans 341 residues: Phosphoribosylformylglycinamidine cyclo-ligase (341 aa).

This sequence belongs to the AIR synthase family.

It localises to the cytoplasm. It catalyses the reaction 2-formamido-N(1)-(5-O-phospho-beta-D-ribosyl)acetamidine + ATP = 5-amino-1-(5-phospho-beta-D-ribosyl)imidazole + ADP + phosphate + H(+). It functions in the pathway purine metabolism; IMP biosynthesis via de novo pathway; 5-amino-1-(5-phospho-D-ribosyl)imidazole from N(2)-formyl-N(1)-(5-phospho-D-ribosyl)glycinamide: step 2/2. The protein is Phosphoribosylformylglycinamidine cyclo-ligase of Caldicellulosiruptor saccharolyticus (strain ATCC 43494 / DSM 8903 / Tp8T 6331).